The primary structure comprises 360 residues: Photosystem II protein D1 (360 aa).

Transmembrane regions (helical) follow at residues 29–46 (YIGW…TATS), 118–133 (HFLL…EWEL), and 142–156 (WIFV…AASA). His118 contributes to the chlorophyll a binding site. Residue Tyr126 participates in pheophytin a binding. [CaMn4O5] cluster contacts are provided by Asp170 and Glu189. The helical transmembrane segment at 197-218 (FHMAGVAGVFGGSLFSAMHGSL) threads the bilayer. Chlorophyll a is bound at residue His198. A quinone contacts are provided by residues His215 and 264 to 265 (SF). Position 215 (His215) interacts with Fe cation. A Fe cation-binding site is contributed by His272. A helical transmembrane segment spans residues 274–288 (FLAAWPVVGIWLTAL). His332, Glu333, Asp342, and Ala344 together coordinate [CaMn4O5] cluster. Residues 345-360 (SNEVLPVAVNAPAVNG) constitute a propeptide that is removed on maturation.

Belongs to the reaction center PufL/M/PsbA/D family. In terms of assembly, PSII is composed of 1 copy each of membrane proteins PsbA, PsbB, PsbC, PsbD, PsbE, PsbF, PsbH, PsbI, PsbJ, PsbK, PsbL, PsbM, PsbT, PsbX, PsbY, PsbZ, Psb30/Ycf12, at least 3 peripheral proteins of the oxygen-evolving complex and a large number of cofactors. It forms dimeric complexes. The D1/D2 heterodimer binds P680, chlorophylls that are the primary electron donor of PSII, and subsequent electron acceptors. It shares a non-heme iron and each subunit binds pheophytin, quinone, additional chlorophylls, carotenoids and lipids. D1 provides most of the ligands for the Mn4-Ca-O5 cluster of the oxygen-evolving complex (OEC). There is also a Cl(-1) ion associated with D1 and D2, which is required for oxygen evolution. The PSII complex binds additional chlorophylls, carotenoids and specific lipids. is required as a cofactor. In terms of processing, tyr-161 forms a radical intermediate that is referred to as redox-active TyrZ, YZ or Y-Z. C-terminally processed by CTPA; processing is essential to allow assembly of the oxygen-evolving complex and thus photosynthetic growth.

It localises to the plastid. The protein resides in the chloroplast thylakoid membrane. It catalyses the reaction 2 a plastoquinone + 4 hnu + 2 H2O = 2 a plastoquinol + O2. In terms of biological role, photosystem II (PSII) is a light-driven water:plastoquinone oxidoreductase that uses light energy to abstract electrons from H(2)O, generating O(2) and a proton gradient subsequently used for ATP formation. It consists of a core antenna complex that captures photons, and an electron transfer chain that converts photonic excitation into a charge separation. The D1/D2 (PsbA/PsbD) reaction center heterodimer binds P680, the primary electron donor of PSII as well as several subsequent electron acceptors. This Heterosigma akashiwo (Chromophytic alga) protein is Photosystem II protein D1.